The primary structure comprises 141 residues: Large ribosomal subunit protein uL16 (141 aa).

Over residues 1–16 (MLMPRKPPKGFRKPHH) the composition is skewed to basic residues. The tract at residues 1–27 (MLMPRKPPKGFRKPHHPDRSGASKGGN) is disordered.

It belongs to the universal ribosomal protein uL16 family. In terms of assembly, part of the 50S ribosomal subunit.

Functionally, binds 23S rRNA and is also seen to make contacts with the A and possibly P site tRNAs. The protein is Large ribosomal subunit protein uL16 of Salinispora arenicola (strain CNS-205).